The chain runs to 482 residues: ATP synthase subunit beta (482 aa).

162–169 is an ATP binding site; the sequence is GGAGVGKT.

F-type ATPases have 2 components, CF(1) - the catalytic core - and CF(0) - the membrane proton channel. CF(1) has five subunits: alpha(3), beta(3), gamma(1), delta(1), epsilon(1). CF(0) has four main subunits: a(1), b(1), b'(1) and c(9-12).

It is found in the cellular thylakoid membrane. The enzyme catalyses ATP + H2O + 4 H(+)(in) = ADP + phosphate + 5 H(+)(out). Inhibited by dicyclohexylcarbodiimide. Produces ATP from ADP in the presence of a proton gradient across the membrane. The catalytic sites are hosted primarily by the beta subunits. Its function is as follows. The complex from the organism is particularly stable to disruption and remains functional after 6 hrs at 55 degrees Celsius. In Thermosynechococcus vestitus (strain NIES-2133 / IAM M-273 / BP-1), this protein is ATP synthase subunit beta.